The chain runs to 430 residues: Zinc carboxypeptidase A 1 (430 aa).

Residues 1 to 22 (MSLNKCLLFALLAIVASASVSA) form the signal peptide. The 300-residue stretch at 124–423 (QYYELDDTYA…DSIVAMATEV (300 aa)) folds into the Peptidase M14 domain. 2 residues coordinate Zn(2+): histidine 187 and glutamate 190. A disulfide bond links cysteine 252 and cysteine 275. Zn(2+) is bound at residue histidine 311. The active-site Proton donor/acceptor is the glutamate 386.

The protein belongs to the peptidase M14 family. It depends on Zn(2+) as a cofactor.

It localises to the secreted. The polypeptide is Zinc carboxypeptidase A 1 (Drosophila melanogaster (Fruit fly)).